Consider the following 78-residue polypeptide: Acyl carrier protein (78 aa).

A Carrier domain is found at 2–77 (SDSAEKVKKI…DAIDYIEANK (76 aa)). Residue S37 is modified to O-(pantetheine 4'-phosphoryl)serine.

The protein belongs to the acyl carrier protein (ACP) family. 4'-phosphopantetheine is transferred from CoA to a specific serine of apo-ACP by AcpS. This modification is essential for activity because fatty acids are bound in thioester linkage to the sulfhydryl of the prosthetic group.

It localises to the cytoplasm. It participates in lipid metabolism; fatty acid biosynthesis. Functionally, carrier of the growing fatty acid chain in fatty acid biosynthesis. The sequence is that of Acyl carrier protein from Sphingopyxis alaskensis (strain DSM 13593 / LMG 18877 / RB2256) (Sphingomonas alaskensis).